The sequence spans 553 residues: Serine/threonine-protein kinase WNG2 (553 aa).

Disordered regions lie at residues 1 to 20 (MMFPAVAAPPRRLPGERLQR) and 88 to 107 (NREPPEDSAARPSSRSGGAE). The N-terminal stretch at 1 to 64 (MMFPAVAAPP…GLSWVSVAVA (64 aa)) is a signal peptide. Residues 125–395 (FKQLRPVDEF…IGEVMEDPFF (271 aa)) enclose the Protein kinase domain. K186 contributes to the ATP binding site. D278 acts as the Proton acceptor in catalysis. The tract at residues 432–553 (REKADAAAKA…GFNKEDAQES (122 aa)) is disordered. Low complexity predominate over residues 438–451 (AAKAADNAEVPAAK). Basic and acidic residues-rich tracts occupy residues 465–486 (GDRDRAGSGEKPAERAEEEKGR), 494–524 (EGNHDRTDDAGREELREGPGDQKPSGEENRE), and 531–553 (QREEQREGTGLEEGFNKEDAQES).

The protein belongs to the protein kinase superfamily. STE Ser/Thr protein kinase family. WNG subfamily. It depends on Mg(2+) as a cofactor.

Its subcellular location is the cytoplasmic granule. The protein resides in the secreted. It is found in the parasitophorous vacuole lumen. The catalysed reaction is L-seryl-[protein] + ATP = O-phospho-L-seryl-[protein] + ADP + H(+). It carries out the reaction L-threonyl-[protein] + ATP = O-phospho-L-threonyl-[protein] + ADP + H(+). Probable serine/threonine-protein kinase. This Toxoplasma gondii protein is Serine/threonine-protein kinase WNG2.